The primary structure comprises 413 residues: Sensor protein SphS (413 aa).

The Histidine kinase domain occupies 176–398 (DVAHELKTPL…WLRVQLPQEP (223 aa)). His179 carries the phosphohistidine; by autocatalysis modification.

The protein resides in the cytoplasm. The enzyme catalyses ATP + protein L-histidine = ADP + protein N-phospho-L-histidine.. In terms of biological role, member of the two-component regulatory system SphR/SphS. Sensory kinase. Is involved in inducible production of alkaline phosphatase in response to phosphate limitation as it is directly involved in the regulation of phoA transcription in response to phosphate limitation. SphS functions as a protein kinase that phosphorylates SphR. The chain is Sensor protein SphS (sphS) from Synechococcus elongatus (strain ATCC 33912 / PCC 7942 / FACHB-805) (Anacystis nidulans R2).